We begin with the raw amino-acid sequence, 215 residues long: UPF0502 protein YceH (215 aa).

N6-acetyllysine is present on lysine 80.

Belongs to the UPF0502 family.

This chain is UPF0502 protein YceH, found in Shigella boydii serotype 18 (strain CDC 3083-94 / BS512).